We begin with the raw amino-acid sequence, 251 residues long: MNYLKTSGIVIKEVNTGEADRIITIFSKNKGKISALAKGARRPKSHLVAGTQLLCYSEFVLFKGKDMYTVNSCDVIESFYDIRNDLERLTYAAHMMDIVNDVILENQPASRLLQLFLNSLYMLSKTDRSPLQIVRVFEIRLLSTMGYAPWVSSCIKCGSTVFDSMYFSFLKCGFLCSKCLENDKGALKISEGAAKALNYIVHSKMSNLFSFEVSESVLDELGKVSQRYMKERLEKNYTKLDFIKTLDRIKC.

Belongs to the RecO family.

Involved in DNA repair and RecF pathway recombination. The polypeptide is DNA repair protein RecO (Acetivibrio thermocellus (strain ATCC 27405 / DSM 1237 / JCM 9322 / NBRC 103400 / NCIMB 10682 / NRRL B-4536 / VPI 7372) (Clostridium thermocellum)).